Reading from the N-terminus, the 144-residue chain is Large ribosomal subunit protein uL15 (144 aa).

The interval Met1–Gln54 is disordered. The span at Arg21–Cys31 shows a compositional bias: gly residues.

Belongs to the universal ribosomal protein uL15 family. Part of the 50S ribosomal subunit.

In terms of biological role, binds to the 23S rRNA. This Dechloromonas aromatica (strain RCB) protein is Large ribosomal subunit protein uL15.